An 81-amino-acid polypeptide reads, in one-letter code: Photosystem I iron-sulfur center (81 aa).

2 4Fe-4S ferredoxin-type domains span residues 2-31 (AHSV…MVPW) and 39-68 (IASA…VRVY). [4Fe-4S] cluster contacts are provided by cysteine 11, cysteine 14, cysteine 17, cysteine 21, cysteine 48, cysteine 51, cysteine 54, and cysteine 58.

As to quaternary structure, the eukaryotic PSI reaction center is composed of at least 11 subunits. [4Fe-4S] cluster is required as a cofactor.

It is found in the plastid. It localises to the chloroplast thylakoid membrane. The catalysed reaction is reduced [plastocyanin] + hnu + oxidized [2Fe-2S]-[ferredoxin] = oxidized [plastocyanin] + reduced [2Fe-2S]-[ferredoxin]. In terms of biological role, apoprotein for the two 4Fe-4S centers FA and FB of photosystem I (PSI); essential for photochemical activity. FB is the terminal electron acceptor of PSI, donating electrons to ferredoxin. The C-terminus interacts with PsaA/B/D and helps assemble the protein into the PSI complex. Required for binding of PsaD and PsaE to PSI. PSI is a plastocyanin/cytochrome c6-ferredoxin oxidoreductase, converting photonic excitation into a charge separation, which transfers an electron from the donor P700 chlorophyll pair to the spectroscopically characterized acceptors A0, A1, FX, FA and FB in turn. The chain is Photosystem I iron-sulfur center from Gracilaria tenuistipitata var. liui (Red alga).